The primary structure comprises 291 residues: Ribose-phosphate pyrophosphokinase (291 aa).

ATP contacts are provided by residues 34–36 and 93–94; these read DGE and RQ. 2 residues coordinate Mg(2+): His-127 and Asp-165. Lys-188 is a catalytic residue. Residues Arg-190, Asp-216, and 220–224 each bind D-ribose 5-phosphate; that span reads STGGT.

It belongs to the ribose-phosphate pyrophosphokinase family. Class III (archaeal) subfamily. As to quaternary structure, homodimer. It depends on Mg(2+) as a cofactor.

It localises to the cytoplasm. The catalysed reaction is D-ribose 5-phosphate + ATP = 5-phospho-alpha-D-ribose 1-diphosphate + AMP + H(+). It functions in the pathway metabolic intermediate biosynthesis; 5-phospho-alpha-D-ribose 1-diphosphate biosynthesis; 5-phospho-alpha-D-ribose 1-diphosphate from D-ribose 5-phosphate (route I): step 1/1. Involved in the biosynthesis of the central metabolite phospho-alpha-D-ribosyl-1-pyrophosphate (PRPP) via the transfer of pyrophosphoryl group from ATP to 1-hydroxyl of ribose-5-phosphate (Rib-5-P). This is Ribose-phosphate pyrophosphokinase from Saccharolobus solfataricus (strain ATCC 35092 / DSM 1617 / JCM 11322 / P2) (Sulfolobus solfataricus).